Consider the following 328-residue polypeptide: Phenylalanine--tRNA ligase alpha subunit (328 aa).

Residue E245 coordinates Mg(2+).

The protein belongs to the class-II aminoacyl-tRNA synthetase family. Phe-tRNA synthetase alpha subunit type 1 subfamily. Tetramer of two alpha and two beta subunits. Mg(2+) serves as cofactor.

Its subcellular location is the cytoplasm. It carries out the reaction tRNA(Phe) + L-phenylalanine + ATP = L-phenylalanyl-tRNA(Phe) + AMP + diphosphate + H(+). The protein is Phenylalanine--tRNA ligase alpha subunit of Helicobacter pylori (strain HPAG1).